We begin with the raw amino-acid sequence, 293 residues long: Pantothenate synthetase (293 aa).

Residue 38-45 (MGALHEGH) coordinates ATP. Residue His45 is the Proton donor of the active site. Gln69 contributes to the (R)-pantoate binding site. Gln69 contacts beta-alanine. 155–158 (GEKD) contacts ATP. Position 161 (Gln161) interacts with (R)-pantoate. 192–195 (QSSR) provides a ligand contact to ATP.

This sequence belongs to the pantothenate synthetase family. In terms of assembly, homodimer.

The protein resides in the cytoplasm. The enzyme catalyses (R)-pantoate + beta-alanine + ATP = (R)-pantothenate + AMP + diphosphate + H(+). The protein operates within cofactor biosynthesis; (R)-pantothenate biosynthesis; (R)-pantothenate from (R)-pantoate and beta-alanine: step 1/1. Catalyzes the condensation of pantoate with beta-alanine in an ATP-dependent reaction via a pantoyl-adenylate intermediate. The chain is Pantothenate synthetase from Hyphomonas neptunium (strain ATCC 15444).